Reading from the N-terminus, the 511-residue chain is Phosphoenolpyruvate carboxylase (511 aa).

Belongs to the PEPCase type 2 family. Homotetramer. Mg(2+) serves as cofactor.

The enzyme catalyses oxaloacetate + phosphate = phosphoenolpyruvate + hydrogencarbonate. Catalyzes the irreversible beta-carboxylation of phosphoenolpyruvate (PEP) to form oxaloacetate (OAA), a four-carbon dicarboxylic acid source for the tricarboxylic acid cycle. This chain is Phosphoenolpyruvate carboxylase, found in Saccharolobus islandicus (strain Y.G.57.14 / Yellowstone #1) (Sulfolobus islandicus).